We begin with the raw amino-acid sequence, 300 residues long: Lysenin-related protein 2 (300 aa).

The interval 12–35 (EQIEVDVVAVWKEGYVYENRGSTS) is N-terminal cap domain. A beta-hairpin domain region spans residues 36 to 109 (VEQKIKITKG…SKEIEHTITI (74 aa)). The tract at residues 110 to 158 (PPTSKFTRWQLNADVGGADIEYMYLIDEVTPIGGTLSIPQVIKSRAKIL) is N-terminal cap domain. Residues 159–299 (VGREIYLGET…EDKWILEVVK (141 aa)) are C-terminal receptor-binding domain. 4 residues coordinate an N-(acyl)-sphingosylphosphocholine: Lys187, Ser229, Tyr235, and Tyr284. A disulfide bridge connects residues Cys274 and Cys285.

This sequence belongs to the lysenin family. In terms of assembly, binds to sphingomyelin as a monomer by using its C-terminal domain. Forms a nonamer when sphingomyelin/LRP-2 ratio is lower than ca 500. Oligomerization, but not binding, is influenced by the fluidity of sphingomyelin. As to expression, expressed by coelomocytes.

The protein resides in the secreted. It localises to the target cell membrane. Functionally, pore-forming toxin that specifically binds sphingomyelin in the plasma membrane of various cells. Has hemolytic activity. It also has antibacterial activities against B.megaterium. The chain is Lysenin-related protein 2 from Eisenia fetida (Red wiggler worm).